Consider the following 458-residue polypeptide: Bifunctional protein GlmU (458 aa).

Residues M1 to R229 are pyrophosphorylase. UDP-N-acetyl-alpha-D-glucosamine is bound by residues L8 to G11, K22, Q72, and G77 to T78. Position 102 (D102) interacts with Mg(2+). UDP-N-acetyl-alpha-D-glucosamine is bound by residues G139, E154, N169, and N227. Mg(2+) is bound at residue N227. Residues V230–N250 are linker. An N-acetyltransferase region spans residues G251–Q458. The UDP-N-acetyl-alpha-D-glucosamine site is built by R332 and K350. H362 functions as the Proton acceptor in the catalytic mechanism. UDP-N-acetyl-alpha-D-glucosamine contacts are provided by Y365 and N376. Acetyl-CoA-binding residues include A379, S404, A422, and R439.

In the N-terminal section; belongs to the N-acetylglucosamine-1-phosphate uridyltransferase family. The protein in the C-terminal section; belongs to the transferase hexapeptide repeat family. In terms of assembly, homotrimer. Mg(2+) is required as a cofactor.

The protein resides in the cytoplasm. The enzyme catalyses alpha-D-glucosamine 1-phosphate + acetyl-CoA = N-acetyl-alpha-D-glucosamine 1-phosphate + CoA + H(+). The catalysed reaction is N-acetyl-alpha-D-glucosamine 1-phosphate + UTP + H(+) = UDP-N-acetyl-alpha-D-glucosamine + diphosphate. The protein operates within nucleotide-sugar biosynthesis; UDP-N-acetyl-alpha-D-glucosamine biosynthesis; N-acetyl-alpha-D-glucosamine 1-phosphate from alpha-D-glucosamine 6-phosphate (route II): step 2/2. It participates in nucleotide-sugar biosynthesis; UDP-N-acetyl-alpha-D-glucosamine biosynthesis; UDP-N-acetyl-alpha-D-glucosamine from N-acetyl-alpha-D-glucosamine 1-phosphate: step 1/1. Its pathway is bacterial outer membrane biogenesis; LPS lipid A biosynthesis. Its function is as follows. Catalyzes the last two sequential reactions in the de novo biosynthetic pathway for UDP-N-acetylglucosamine (UDP-GlcNAc). The C-terminal domain catalyzes the transfer of acetyl group from acetyl coenzyme A to glucosamine-1-phosphate (GlcN-1-P) to produce N-acetylglucosamine-1-phosphate (GlcNAc-1-P), which is converted into UDP-GlcNAc by the transfer of uridine 5-monophosphate (from uridine 5-triphosphate), a reaction catalyzed by the N-terminal domain. This is Bifunctional protein GlmU from Lactococcus lactis subsp. cremoris (strain MG1363).